Consider the following 159-residue polypeptide: 2-C-methyl-D-erythritol 2,4-cyclodiphosphate synthase (159 aa).

Residues aspartate 10 and histidine 12 each contribute to the a divalent metal cation site. 4-CDP-2-C-methyl-D-erythritol 2-phosphate-binding positions include 10–12 and 36–37; these read DVH and HS. Histidine 44 contacts a divalent metal cation. Residues 58 to 60, 63 to 67, 102 to 108, 134 to 137, phenylalanine 141, and arginine 144 each bind 4-CDP-2-C-methyl-D-erythritol 2-phosphate; these read DIG, FPDTD, AQAPKMA, and TTTE.

This sequence belongs to the IspF family. As to quaternary structure, homotrimer. It depends on a divalent metal cation as a cofactor.

The catalysed reaction is 4-CDP-2-C-methyl-D-erythritol 2-phosphate = 2-C-methyl-D-erythritol 2,4-cyclic diphosphate + CMP. It participates in isoprenoid biosynthesis; isopentenyl diphosphate biosynthesis via DXP pathway; isopentenyl diphosphate from 1-deoxy-D-xylulose 5-phosphate: step 4/6. In terms of biological role, involved in the biosynthesis of isopentenyl diphosphate (IPP) and dimethylallyl diphosphate (DMAPP), two major building blocks of isoprenoid compounds. Catalyzes the conversion of 4-diphosphocytidyl-2-C-methyl-D-erythritol 2-phosphate (CDP-ME2P) to 2-C-methyl-D-erythritol 2,4-cyclodiphosphate (ME-CPP) with a corresponding release of cytidine 5-monophosphate (CMP). The polypeptide is 2-C-methyl-D-erythritol 2,4-cyclodiphosphate synthase (Shewanella piezotolerans (strain WP3 / JCM 13877)).